A 197-amino-acid chain; its full sequence is Ion-translocating oxidoreductase complex subunit B (197 aa).

The tract at residues 1-26 (MSIVIIAVLALSALALTFGAVLGFAS) is hydrophobic. The 59-residue stretch at 32 to 90 (EGNPIVDQIDGLLPQTQCGQCGYPGCRPYAEAIANGDAINKCPPGGEATITALADLLDV) folds into the 4Fe-4S domain. Residues C49, C52, C57, C73, C115, C118, C121, C125, C145, C148, C151, and C155 each contribute to the [4Fe-4S] cluster site. 2 consecutive 4Fe-4S ferredoxin-type domains span residues 106-135 (QVAY…GAAK) and 136-165 (QMHT…MIPA).

Belongs to the 4Fe4S bacterial-type ferredoxin family. RnfB subfamily. In terms of assembly, the complex is composed of six subunits: RnfA, RnfB, RnfC, RnfD, RnfE and RnfG. It depends on [4Fe-4S] cluster as a cofactor.

It localises to the cell inner membrane. In terms of biological role, part of a membrane-bound complex that couples electron transfer with translocation of ions across the membrane. The polypeptide is Ion-translocating oxidoreductase complex subunit B (Hahella chejuensis (strain KCTC 2396)).